The following is a 904-amino-acid chain: E3 ubiquitin-protein ligase HACE1 (904 aa).

ANK repeat units lie at residues 34 to 63 (AVYT…DVNY), 68 to 97 (VKRS…NPNY), 101 to 130 (SGCT…DVNI), 134 to 163 (EGLT…NVDV), 167 to 196 (MGQT…DINR), 200 to 230 (SGAT…YLPD), and 232 to 261 (NGVT…RLFQ). One can recognise an HECT domain in the interval 569–904 (SNEKLKQGIA…HCGSYGYTMA (336 aa)). Cys871 functions as the Glycyl thioester intermediate in the catalytic mechanism.

The protein localises to the golgi apparatus. Its subcellular location is the golgi stack membrane. The protein resides in the cytoplasm. It localises to the endoplasmic reticulum. The enzyme catalyses S-ubiquitinyl-[E2 ubiquitin-conjugating enzyme]-L-cysteine + [acceptor protein]-L-lysine = [E2 ubiquitin-conjugating enzyme]-L-cysteine + N(6)-ubiquitinyl-[acceptor protein]-L-lysine.. The protein operates within protein modification; protein ubiquitination. Functionally, E3 ubiquitin-protein ligase involved in Golgi membrane fusion and regulation of small GTPases. Acts as a regulator of Golgi membrane dynamics during the cell cycle: recruited to Golgi membrane by Rab proteins and regulates postmitotic Golgi membrane fusion. Acts by mediating ubiquitination during mitotic Golgi disassembly, ubiquitination serving as a signal for Golgi reassembly later, after cell division. The protein is E3 ubiquitin-protein ligase HACE1 (hace1) of Danio rerio (Zebrafish).